The primary structure comprises 523 residues: Glycerate kinase (523 aa).

S60 carries the phosphoserine modification.

It belongs to the glycerate kinase type-2 family. As to expression, widely expressed.

The protein localises to the cytoplasm. It localises to the mitochondrion. It catalyses the reaction (R)-glycerate + ATP = (2R)-3-phosphoglycerate + ADP + H(+). This Homo sapiens (Human) protein is Glycerate kinase (GLYCTK).